We begin with the raw amino-acid sequence, 479 residues long: Outer membrane protein OprJ (479 aa).

Positions 1–19 are cleaved as a signal peptide; sequence MRKPAFGVSALLIALTLGA. Cys20 is lipidated: N-palmitoyl cysteine. Cys20 carries the S-diacylglycerol cysteine lipid modification. The tract at residues 102–121 is disordered; it reads LNAAATGNRQRQPADLSAGN.

This sequence belongs to the outer membrane factor (OMF) (TC 1.B.17) family.

The protein localises to the cell outer membrane. Functionally, channel-forming component of a multidrug resistance efflux pump. The sequence is that of Outer membrane protein OprJ (oprJ) from Pseudomonas aeruginosa (strain ATCC 15692 / DSM 22644 / CIP 104116 / JCM 14847 / LMG 12228 / 1C / PRS 101 / PAO1).